Consider the following 308-residue polypeptide: ADP-L-glycero-D-manno-heptose-6-epimerase (308 aa).

NADP(+)-binding positions include 10–11 (FI), 31–32 (DN), Lys-38, Lys-53, 75–79 (EGACS), and Asn-92. The Proton acceptor role is filled by Tyr-139. Lys-143 serves as a coordination point for NADP(+). Asn-168 serves as a coordination point for substrate. Residues Val-169 and Lys-177 each coordinate NADP(+). Lys-177 functions as the Proton acceptor in the catalytic mechanism. Residues Ser-179, His-186, 200–203 (FAGS), Arg-208, and Tyr-271 each bind substrate.

The protein belongs to the NAD(P)-dependent epimerase/dehydratase family. HldD subfamily. In terms of assembly, homopentamer. NADP(+) serves as cofactor.

The enzyme catalyses ADP-D-glycero-beta-D-manno-heptose = ADP-L-glycero-beta-D-manno-heptose. It functions in the pathway nucleotide-sugar biosynthesis; ADP-L-glycero-beta-D-manno-heptose biosynthesis; ADP-L-glycero-beta-D-manno-heptose from D-glycero-beta-D-manno-heptose 7-phosphate: step 4/4. The protein operates within bacterial outer membrane biogenesis; LOS core biosynthesis. Its function is as follows. Catalyzes the interconversion between ADP-D-glycero-beta-D-manno-heptose and ADP-L-glycero-beta-D-manno-heptose via an epimerization at carbon 6 of the heptose. This chain is ADP-L-glycero-D-manno-heptose-6-epimerase, found in Haemophilus influenzae (strain ATCC 51907 / DSM 11121 / KW20 / Rd).